The chain runs to 356 residues: Fructose-bisphosphate aldolase 1, chloroplastic (356 aa).

The N-terminal 6 residues, glycine 1 to alanine 6, are a transit peptide targeting the chloroplast. Residues arginine 53 and lysine 143 each coordinate substrate. Glutamate 183 acts as the Proton acceptor in catalysis. Lysine 225 (schiff-base intermediate with dihydroxyacetone-P) is an active-site residue.

The protein belongs to the class I fructose-bisphosphate aldolase family.

It localises to the plastid. Its subcellular location is the chloroplast. The enzyme catalyses beta-D-fructose 1,6-bisphosphate = D-glyceraldehyde 3-phosphate + dihydroxyacetone phosphate. It participates in carbohydrate degradation; glycolysis; D-glyceraldehyde 3-phosphate and glycerone phosphate from D-glucose: step 4/4. In Pisum sativum (Garden pea), this protein is Fructose-bisphosphate aldolase 1, chloroplastic.